Here is a 238-residue protein sequence, read N- to C-terminus: Chorionic somatomammotropin hormone 2 (238 aa).

An N-terminal signal peptide occupies residues 1 to 36; that stretch reads MAPAPSFRGHQWTYNPVRGSCLLLLLVVSNLLLCQG. H66 provides a ligand contact to Zn(2+). N70, N92, N146, and N160 each carry an N-linked (GlcNAc...) asparagine glycan. A disulfide bridge connects residues C97 and C215. D224 serves as a coordination point for Zn(2+). The cysteines at positions 232 and 238 are disulfide-linked.

The protein belongs to the somatotropin/prolactin family.

It localises to the secreted. This is Chorionic somatomammotropin hormone 2 (CSH2) from Bos taurus (Bovine).